The chain runs to 525 residues: GMP synthase [glutamine-hydrolyzing] (525 aa).

The 199-residue stretch at 9 to 207 (RILILDFGSQ…VRDICQCEAL (199 aa)) folds into the Glutamine amidotransferase type-1 domain. C86 serves as the catalytic Nucleophile. Catalysis depends on residues H181 and E183. Residues 208-400 (WTPAKIIDDA…LGLPYDMLYR (193 aa)) enclose the GMPS ATP-PPase domain. ATP is bound at residue 235–241 (SGGVDSS).

Homodimer.

It carries out the reaction XMP + L-glutamine + ATP + H2O = GMP + L-glutamate + AMP + diphosphate + 2 H(+). It functions in the pathway purine metabolism; GMP biosynthesis; GMP from XMP (L-Gln route): step 1/1. Catalyzes the synthesis of GMP from XMP. This Escherichia coli O139:H28 (strain E24377A / ETEC) protein is GMP synthase [glutamine-hydrolyzing].